We begin with the raw amino-acid sequence, 383 residues long: tRNA-specific 2-thiouridylase MnmA (383 aa).

Residues Ala10–Ser17 and Met36 contribute to the ATP site. Catalysis depends on Cys107, which acts as the Nucleophile. Cys107 and Cys206 form a disulfide bridge. Residue Gly131 participates in ATP binding. Residues Lys155–Gln157 form an interaction with tRNA region. Cys206 acts as the Cysteine persulfide intermediate in catalysis. Residues Arg315–Tyr316 are interaction with tRNA.

It belongs to the MnmA/TRMU family.

The protein resides in the cytoplasm. It catalyses the reaction S-sulfanyl-L-cysteinyl-[protein] + uridine(34) in tRNA + AH2 + ATP = 2-thiouridine(34) in tRNA + L-cysteinyl-[protein] + A + AMP + diphosphate + H(+). In terms of biological role, catalyzes the 2-thiolation of uridine at the wobble position (U34) of tRNA, leading to the formation of s(2)U34. This Salinibacter ruber (strain DSM 13855 / M31) protein is tRNA-specific 2-thiouridylase MnmA.